The chain runs to 745 residues: 5-methyltetrahydropteroyltriglutamate--homocysteine methyltransferase (745 aa).

5-methyltetrahydropteroyltri-L-glutamate contacts are provided by Lys-19 and Asn-115. Residues 420–422 and Glu-473 contribute to the L-homocysteine site; that span reads IGS. L-methionine-binding positions include 420–422 and Glu-473; that span reads IGS. Residues Asp-478, Tyr-501, 504 to 505, and Trp-550 each bind 5-methyltetrahydropteroyltri-L-glutamate; that span reads RA. Asp-588 is an L-homocysteine binding site. Asp-588 is an L-methionine binding site. Zn(2+) is bound by residues His-630, Cys-632, and Glu-654. His-683 functions as the Proton donor in the catalytic mechanism. Cys-715 is a binding site for Zn(2+).

It belongs to the vitamin-B12 independent methionine synthase family. Zn(2+) is required as a cofactor.

It catalyses the reaction 5-methyltetrahydropteroyltri-L-glutamate + L-homocysteine = tetrahydropteroyltri-L-glutamate + L-methionine. Its pathway is amino-acid biosynthesis; L-methionine biosynthesis via de novo pathway; L-methionine from L-homocysteine (MetE route): step 1/1. In terms of biological role, catalyzes the transfer of a methyl group from 5-methyltetrahydrofolate to homocysteine resulting in methionine formation. The polypeptide is 5-methyltetrahydropteroyltriglutamate--homocysteine methyltransferase (Streptococcus mutans serotype c (strain ATCC 700610 / UA159)).